Here is a 40-residue protein sequence, read N- to C-terminus: Dolichyl-diphosphooligosaccharide--protein glycosyltransferase subunit 4 (40 aa).

Over 1–7 the chain is Lumenal; it reads MITDMQL. Residues 8-28 traverse the membrane as a helical segment; that stretch reads AIFSNVLGVFLFLLVVAYHYI. The Cytoplasmic segment spans residues 29-40; the sequence is NANTGKPSAKAK.

It belongs to the OST4 family. Component of the oligosaccharyltransferase (OST) complex.

The protein localises to the endoplasmic reticulum membrane. In terms of biological role, subunit of the oligosaccharyl transferase (OST) complex that catalyzes the initial transfer of a defined glycan (Glc(3)Man(9)GlcNAc(2) in eukaryotes) from the lipid carrier dolichol-pyrophosphate to an asparagine residue within an Asn-X-Ser/Thr consensus motif in nascent polypeptide chains, the first step in protein N-glycosylation. N-glycosylation occurs cotranslationally and the complex associates with the Sec61 complex at the channel-forming translocon complex that mediates protein translocation across the endoplasmic reticulum (ER). All subunits are required for a maximal enzyme activity. The chain is Dolichyl-diphosphooligosaccharide--protein glycosyltransferase subunit 4 from Drosophila sechellia (Fruit fly).